The following is a 910-amino-acid chain: 2-oxoglutarate dehydrogenase E1 component (910 aa).

It belongs to the alpha-ketoglutarate dehydrogenase family. As to quaternary structure, homodimer. Part of the 2-oxoglutarate dehydrogenase (OGDH) complex composed of E1 (2-oxoglutarate dehydrogenase), E2 (dihydrolipoamide succinyltransferase) and E3 (dihydrolipoamide dehydrogenase); the complex contains multiple copies of the three enzymatic components (E1, E2 and E3). It depends on thiamine diphosphate as a cofactor.

The catalysed reaction is N(6)-[(R)-lipoyl]-L-lysyl-[protein] + 2-oxoglutarate + H(+) = N(6)-[(R)-S(8)-succinyldihydrolipoyl]-L-lysyl-[protein] + CO2. In terms of biological role, E1 component of the 2-oxoglutarate dehydrogenase (OGDH) complex which catalyzes the decarboxylation of 2-oxoglutarate, the first step in the conversion of 2-oxoglutarate to succinyl-CoA and CO(2). This chain is 2-oxoglutarate dehydrogenase E1 component, found in Staphylococcus aureus (strain N315).